The following is a 510-amino-acid chain: GMP synthase [glutamine-hydrolyzing] (510 aa).

One can recognise a Glutamine amidotransferase type-1 domain in the interval Leu5–Asp195. Cys82 (nucleophile) is an active-site residue. Active-site residues include His169 and Glu171. Positions Trp196–Arg385 constitute a GMPS ATP-PPase domain. Residue Ser223–Ser229 participates in ATP binding.

Homodimer.

It carries out the reaction XMP + L-glutamine + ATP + H2O = GMP + L-glutamate + AMP + diphosphate + 2 H(+). It participates in purine metabolism; GMP biosynthesis; GMP from XMP (L-Gln route): step 1/1. In terms of biological role, catalyzes the synthesis of GMP from XMP. This is GMP synthase [glutamine-hydrolyzing] from Clostridium botulinum (strain Loch Maree / Type A3).